A 267-amino-acid polypeptide reads, in one-letter code: Phosphonates import ATP-binding protein PhnC 2 (267 aa).

Positions 3–247 constitute an ABC transporter domain; that stretch reads LSLDGVDLVH…ALDALYANEQ (245 aa). Residue 36 to 43 participates in ATP binding; that stretch reads GPSGAGKT.

Belongs to the ABC transporter superfamily. Phosphonates importer (TC 3.A.1.9.1) family. As to quaternary structure, the complex is composed of two ATP-binding proteins (PhnC), two transmembrane proteins (PhnE) and a solute-binding protein (PhnD).

The protein localises to the cell inner membrane. The enzyme catalyses phosphonate(out) + ATP + H2O = phosphonate(in) + ADP + phosphate + H(+). Part of the ABC transporter complex PhnCDE involved in phosphonates import. Responsible for energy coupling to the transport system. This Pseudomonas aeruginosa (strain UCBPP-PA14) protein is Phosphonates import ATP-binding protein PhnC 2.